The chain runs to 432 residues: Protein ABHD8 (432 aa).

Disordered stretches follow at residues 47–69 and 121–149; these read KHAGPAPAPTPPPPLSDAAQGDQ and PAGSDGRSVPGSAGSGSGGRRRRARRPKR. The span at 52–61 shows a compositional bias: pro residues; the sequence is APAPTPPPPL. Residues 139–149 are compositionally biased toward basic residues; it reads GRRRRARRPKR. The AB hydrolase-1 domain occupies 170 to 272; it reads VLFFIHGVGG…HKVIMINGGG (103 aa). Active-site charge relay system residues include S245, D363, and H391.

Belongs to the AB hydrolase superfamily. As to quaternary structure, interacts with NLRP3 (via NACHT and LLR domains); this interaction is enhanced in the presence of NLRP3 inflammasome inducers, such as ATP, nigericin, silica, or alum. Interacts with ZDHHC12.

Its subcellular location is the cytoplasm. Its function is as follows. Negatively regulates NLRP3-driven inflammation. Promotes NLRP3 degradation through the chaperone-mediated autophagy (CMA) pathway, hence attenuating inflammasome activation and IL1B secretion. Acts by recruiting palmitoyltransferase ZDHHC12 to NLRP3, facilitating NLRP3 palmitoylation and subsequent degradation. This is Protein ABHD8 from Bos taurus (Bovine).